A 212-amino-acid chain; its full sequence is MNSRLIVTGTDTGIGKTVFSAALCHALGAAYWKPVQSGLEEETDSEIVARLAQASPQRILPEAWRLNTPASPHLSARLDGVEIRPEEMHIPATSLPLVIEGAGGLLVPLNDKTLFADLFAIWRIPAILCARAALGTINHTLLSLEAMRSRDIPVLGVAFIGEANEDTETTIAHLGRVKRLGRLPLLDDLSPEKLHHSFARNFHIDDFAGVAR.

13-18 serves as a coordination point for ATP; that stretch reads GIGKTV. T17 is a binding site for Mg(2+). The active site involves K33. Residue S37 coordinates substrate. E100 contributes to the Mg(2+) binding site. ATP is bound by residues 100–103 and 184–186; these read EGAG and PLL.

Belongs to the dethiobiotin synthetase family. In terms of assembly, homodimer. It depends on Mg(2+) as a cofactor.

It localises to the cytoplasm. It catalyses the reaction (7R,8S)-7,8-diammoniononanoate + CO2 + ATP = (4R,5S)-dethiobiotin + ADP + phosphate + 3 H(+). Its pathway is cofactor biosynthesis; biotin biosynthesis; biotin from 7,8-diaminononanoate: step 1/2. Its function is as follows. Catalyzes a mechanistically unusual reaction, the ATP-dependent insertion of CO2 between the N7 and N8 nitrogen atoms of 7,8-diaminopelargonic acid (DAPA, also called 7,8-diammoniononanoate) to form a ureido ring. This chain is ATP-dependent dethiobiotin synthetase BioD, found in Brucella canis (strain ATCC 23365 / NCTC 10854 / RM-666).